Here is a 404-residue protein sequence, read N- to C-terminus: Tryptophan synthase beta chain (404 aa).

Lys-91 is modified (N6-(pyridoxal phosphate)lysine).

Belongs to the TrpB family. As to quaternary structure, tetramer of two alpha and two beta chains. Pyridoxal 5'-phosphate serves as cofactor.

The enzyme catalyses (1S,2R)-1-C-(indol-3-yl)glycerol 3-phosphate + L-serine = D-glyceraldehyde 3-phosphate + L-tryptophan + H2O. It participates in amino-acid biosynthesis; L-tryptophan biosynthesis; L-tryptophan from chorismate: step 5/5. The beta subunit is responsible for the synthesis of L-tryptophan from indole and L-serine. This chain is Tryptophan synthase beta chain, found in Clavibacter michiganensis subsp. michiganensis (strain NCPPB 382).